The chain runs to 156 residues: Transcription antitermination protein NusB (156 aa).

Belongs to the NusB family.

Involved in transcription antitermination. Required for transcription of ribosomal RNA (rRNA) genes. Binds specifically to the boxA antiterminator sequence of the ribosomal RNA (rrn) operons. This is Transcription antitermination protein NusB from Rickettsia africae (strain ESF-5).